The primary structure comprises 391 residues: D-alanine--D-alanine ligase (391 aa).

Residues 1–24 (MSSENLPQSPERAESPQAPRRKPR) are disordered. The ATP-grasp domain occupies 171–381 (KRVFLSFGLP…YPELVDRLIQ (211 aa)). 207 to 262 (AGEHGWPLFIKPARGGSSMGITKVDSVEGLDAAIEEARRHDPKFLVESLLRGREIE) is an ATP binding site. Residues aspartate 335, glutamate 348, and asparagine 350 each contribute to the Mg(2+) site.

The protein belongs to the D-alanine--D-alanine ligase family. Requires Mg(2+) as cofactor. The cofactor is Mn(2+).

The protein resides in the cytoplasm. The catalysed reaction is 2 D-alanine + ATP = D-alanyl-D-alanine + ADP + phosphate + H(+). It functions in the pathway cell wall biogenesis; peptidoglycan biosynthesis. Its function is as follows. Cell wall formation. The protein is D-alanine--D-alanine ligase of Streptomyces griseus subsp. griseus (strain JCM 4626 / CBS 651.72 / NBRC 13350 / KCC S-0626 / ISP 5235).